The sequence spans 425 residues: Histidine--tRNA ligase (425 aa).

Belongs to the class-II aminoacyl-tRNA synthetase family. Homodimer.

The protein resides in the cytoplasm. The enzyme catalyses tRNA(His) + L-histidine + ATP = L-histidyl-tRNA(His) + AMP + diphosphate + H(+). This is Histidine--tRNA ligase from Buchnera aphidicola subsp. Baizongia pistaciae (strain Bp).